Reading from the N-terminus, the 286-residue chain is General stress protein A (286 aa).

UDP-binding positions include 12–17 and 111–112; these read CADDNY and DC. Mn(2+)-binding residues include aspartate 111, aspartate 113, and histidine 247. A UDP-binding site is contributed by 247-253; the sequence is HFCGGEK.

This sequence belongs to the glycosyltransferase 8 family.

This Bacillus subtilis (strain 168) protein is General stress protein A (gspA).